The following is a 238-amino-acid chain: 1-(5-phosphoribosyl)-5-[(5-phosphoribosylamino)methylideneamino] imidazole-4-carboxamide isomerase (238 aa).

Catalysis depends on aspartate 8, which acts as the Proton acceptor. Aspartate 129 functions as the Proton donor in the catalytic mechanism.

It belongs to the HisA/HisF family.

The protein resides in the cytoplasm. The enzyme catalyses 1-(5-phospho-beta-D-ribosyl)-5-[(5-phospho-beta-D-ribosylamino)methylideneamino]imidazole-4-carboxamide = 5-[(5-phospho-1-deoxy-D-ribulos-1-ylimino)methylamino]-1-(5-phospho-beta-D-ribosyl)imidazole-4-carboxamide. It functions in the pathway amino-acid biosynthesis; L-histidine biosynthesis; L-histidine from 5-phospho-alpha-D-ribose 1-diphosphate: step 4/9. This is 1-(5-phosphoribosyl)-5-[(5-phosphoribosylamino)methylideneamino] imidazole-4-carboxamide isomerase from Brachyspira hyodysenteriae (strain ATCC 49526 / WA1).